The following is a 333-amino-acid chain: Adenosine deaminase (333 aa).

Positions 12 and 14 each coordinate Zn(2+). 3 residues coordinate substrate: H14, D16, and G170. A Zn(2+)-binding site is contributed by H197. E200 serves as the catalytic Proton donor. D278 is a binding site for Zn(2+). Residue D279 coordinates substrate.

The protein belongs to the metallo-dependent hydrolases superfamily. Adenosine and AMP deaminases family. Adenosine deaminase subfamily. Zn(2+) is required as a cofactor.

The catalysed reaction is adenosine + H2O + H(+) = inosine + NH4(+). It carries out the reaction 2'-deoxyadenosine + H2O + H(+) = 2'-deoxyinosine + NH4(+). Functionally, catalyzes the hydrolytic deamination of adenosine and 2-deoxyadenosine. This Proteus mirabilis (strain HI4320) protein is Adenosine deaminase.